Here is a 120-residue protein sequence, read N- to C-terminus: NAD(P)H-quinone oxidoreductase subunit 3 (120 aa).

3 helical membrane-spanning segments follow: residues 6–26 (GYDA…LALV), 64–84 (MFAL…PWAV), and 89–109 (LGLL…VALA).

The protein belongs to the complex I subunit 3 family. NDH-1 can be composed of about 15 different subunits; different subcomplexes with different compositions have been identified which probably have different functions.

The protein resides in the cellular thylakoid membrane. The enzyme catalyses a plastoquinone + NADH + (n+1) H(+)(in) = a plastoquinol + NAD(+) + n H(+)(out). It carries out the reaction a plastoquinone + NADPH + (n+1) H(+)(in) = a plastoquinol + NADP(+) + n H(+)(out). Its function is as follows. NDH-1 shuttles electrons from an unknown electron donor, via FMN and iron-sulfur (Fe-S) centers, to quinones in the respiratory and/or the photosynthetic chain. The immediate electron acceptor for the enzyme in this species is believed to be plastoquinone. Couples the redox reaction to proton translocation, and thus conserves the redox energy in a proton gradient. Cyanobacterial NDH-1 also plays a role in inorganic carbon-concentration. This is NAD(P)H-quinone oxidoreductase subunit 3 from Prochlorococcus marinus (strain MIT 9313).